A 350-amino-acid polypeptide reads, in one-letter code: MKSLLACLALMIAGIATALFIGFHDHTGNKKIVYDDDQEGLQDQIVFKFSHVVAENTPKGLAANKFADLVNEKSGGKIKIEVFPNGSLYSDIEEIEALQNGDVQFIAPSTSKLGMLSPEWGVLDLPYAFTDYNAVKKGLNGSIGTQLFDSLKKNQLKGLAYWTNGFKQITTNQGPVKTPDDLKGQDLRIMQSDVIEDQFKLLGATPHQESFNSTFQLLENNVVDGEENTISNIYSKKFYNVQDYLTISSHGYLGYAVMTDEHFWKAQTPETRRILTEAMKETTEWNETYAEQMNKEQLEEIKKNSAIHIYELSDKEKQEWMKRLDPVYRQYEPIFGRELIRELLELRKDS.

The N-terminal stretch at 1–18 (MKSLLACLALMIAGIATA) is a signal peptide.

It belongs to the bacterial solute-binding protein 7 family.

Its subcellular location is the secreted. Its function is as follows. Part of the binding-protein-dependent transport system for uptake of C4-dicarboxylates. Responsible for growth on fumarate and succinate but not malate. Is not directly involved in C4-dicarboxylate uptake, but plays a sensory role in the DctS/DctR two-component system which regulates the expression of the dctA C4-dicarboxylate transporter. In Bacillus subtilis (strain 168), this protein is C4-dicarboxylate-binding protein DctB (dctB).